The primary structure comprises 106 residues: MPPSTELDALVDKIVNDHSLSEPGQSLKELGDNGKYIMDVQMKKLLKLHDQSFIERCFTPMEELKNRYAKVKERSGDLQKEAELVDRDIRIIEMAIQDINKNKSHQ.

This sequence belongs to the BLOC1S1 family. As to quaternary structure, component of the biogenesis of lysosome-related organelles complex-1 (BLOC-1).

It is found in the endosome. Its function is as follows. Component of the biogenesis of lysosome-related organelles complex-1 (BLOC-1), a complex involved in endosomal cargo sorting. In Candida glabrata (strain ATCC 2001 / BCRC 20586 / JCM 3761 / NBRC 0622 / NRRL Y-65 / CBS 138) (Yeast), this protein is Biogenesis of lysosome-related organelles complex 1 subunit BLS1 (BLS1).